We begin with the raw amino-acid sequence, 673 residues long: NACHT, LRR and PYD domains-containing protein 10 (673 aa).

One can recognise a Pyrin domain in the interval 1–92 (MALARANSPQ…VDYLNQVCLN (92 aa)). The region spanning 163–469 (PIVVMQGSAG…AMSFLVKEDQ (307 aa)) is the NACHT domain. 169-176 (GSAGTGKT) is a binding site for ATP. The segment at 578-673 (SDKKKSVSVT…DGEMIDKMNG (96 aa)) is disordered. Over residues 584-597 (VSVTSSFSSGKVQS) the composition is skewed to low complexity. Residues 633-648 (ASREKGHMEMNDKEDG) show a composition bias toward basic and acidic residues. Residues 649 to 658 (GVEEQEDEEG) show a composition bias toward acidic residues. Residues 659 to 673 (QTLKKDGEMIDKMNG) are compositionally biased toward basic and acidic residues.

It belongs to the NLRP family. Oligomerizes. Interacts with PYCARD. Also interacts with CASP1 and IL1B. Interacts with NOD1 and components of the NOD1 signaling pathway including RIPK2, NR2C2/TAK1 and IKBKG/NEMO. In terms of tissue distribution, expressed in skin, tongue, heart, colon and several cell lines of hematopoietic and myocytic origin but not in kidney, skeletal muscle, spleen, liver, lung, thymus, brain or small intestine (at protein level).

It is found in the cytoplasm. Its subcellular location is the cell membrane. In terms of biological role, inhibits autoprocessing of CASP1, CASP1-dependent IL1B secretion, PYCARD aggregation and PYCARD-mediated apoptosis but not apoptosis induced by FAS or BID. Displays anti-inflammatory activity. Required for immunity against C.albicans infection. Involved in the innate immune response by contributing to pro-inflammatory cytokine release in response to invasive bacterial infection. Contributes to T-cell-mediated inflammatory responses in the skin. Plays a role in protection against periodontitis through its involvement in induction of IL1A via ERK activation in oral epithelial cells infected with periodontal pathogens. Exhibits both ATPase and GTPase activities. This is NACHT, LRR and PYD domains-containing protein 10 (Nlrp10) from Mus musculus (Mouse).